We begin with the raw amino-acid sequence, 994 residues long: Protein HIR2 (994 aa).

WD repeat units follow at residues 10–49, 70–110, 118–157, 164–203, 220–263, 276–319, and 323–364; these read LHSG…QLTT, AHED…HELI, DGTS…YQEL, EKLT…TTRN, SMNV…NNIL, QYNP…PIFI, and ISKK…NTVS. Disordered stretches follow at residues 413 to 445 and 482 to 550; these read VHEA…SPLK and AMST…TSNL. The segment covering 414-426 has biased composition (basic and acidic residues); it reads HEAKAKKPTEGIK. Polar residues predominate over residues 482-492; that stretch reads AMSTTRSTKSQ. Residues 495-509 show a composition bias toward basic and acidic residues; it reads NPKEKPTKVTPEKAK. The span at 525–545 shows a compositional bias: low complexity; the sequence is SSMNENSSNNSVKKSNTSESN.

It belongs to the WD repeat HIR1 family.

The protein localises to the nucleus. Functionally, required for replication-independent chromatin assembly and for the periodic repression of histone gene transcription during the cell cycle. The polypeptide is Protein HIR2 (HIR2) (Debaryomyces hansenii (strain ATCC 36239 / CBS 767 / BCRC 21394 / JCM 1990 / NBRC 0083 / IGC 2968) (Yeast)).